A 110-amino-acid chain; its full sequence is UPF0122 protein spr1167 (110 aa).

Belongs to the UPF0122 family.

Might take part in the signal recognition particle (SRP) pathway. This is inferred from the conservation of its genetic proximity to ftsY/ffh. May be a regulatory protein. The sequence is that of UPF0122 protein spr1167 from Streptococcus pneumoniae (strain ATCC BAA-255 / R6).